Reading from the N-terminus, the 527-residue chain is Probable serine/threonine-protein kinase DDB_G0271538 (527 aa).

Basic and acidic residues predominate over residues 1–10; the sequence is MNINFSKDDI. A disordered region spans residues 1 to 24; it reads MNINFSKDDITGLPKSTKEEDEND. One can recognise a Protein kinase domain in the interval 33–294; that stretch reads LFMDVEIGRG…KIVVEGLKVL (262 aa). Residues 39-47 and K60 contribute to the ATP site; that span reads IGRGSFGQV. D156 functions as the Proton acceptor in the catalytic mechanism. Disordered regions lie at residues 304-375, 422-452, and 485-527; these read VKGK…ISGS, FTPP…DDVP, and TALD…KKKL. Positions 313 to 324 are enriched in acidic residues; it reads DPDEDSFIDPND. Over residues 325–359 the composition is skewed to low complexity; sequence DSNNNNNSENNNNNNDNSNENNENNNENNNNSNEN. Residues 440–452 are compositionally biased toward acidic residues; it reads VDEDEDEDEDDVP. The span at 512–527 shows a compositional bias: basic residues; that stretch reads PKKKPNNKNKKKKKKL.

Belongs to the protein kinase superfamily. TKL Ser/Thr protein kinase family.

It catalyses the reaction L-seryl-[protein] + ATP = O-phospho-L-seryl-[protein] + ADP + H(+). The enzyme catalyses L-threonyl-[protein] + ATP = O-phospho-L-threonyl-[protein] + ADP + H(+). The sequence is that of Probable serine/threonine-protein kinase DDB_G0271538 from Dictyostelium discoideum (Social amoeba).